We begin with the raw amino-acid sequence, 231 residues long: Octanoyltransferase (231 aa).

The BPL/LPL catalytic domain occupies 49–224 (ADTPDEIWLL…ALQRLLPPVY (176 aa)). Substrate contacts are provided by residues 88 to 95 (RGGQITYH), 155 to 157 (ALG), and 168 to 170 (GLA). Cysteine 186 acts as the Acyl-thioester intermediate in catalysis.

Belongs to the LipB family.

It localises to the cytoplasm. It carries out the reaction octanoyl-[ACP] + L-lysyl-[protein] = N(6)-octanoyl-L-lysyl-[protein] + holo-[ACP] + H(+). It functions in the pathway protein modification; protein lipoylation via endogenous pathway; protein N(6)-(lipoyl)lysine from octanoyl-[acyl-carrier-protein]: step 1/2. Functionally, catalyzes the transfer of endogenously produced octanoic acid from octanoyl-acyl-carrier-protein onto the lipoyl domains of lipoate-dependent enzymes. Lipoyl-ACP can also act as a substrate although octanoyl-ACP is likely to be the physiological substrate. This chain is Octanoyltransferase, found in Aromatoleum aromaticum (strain DSM 19018 / LMG 30748 / EbN1) (Azoarcus sp. (strain EbN1)).